The primary structure comprises 371 residues: Forkhead box protein E1 (371 aa).

The tract at residues 21–53 (EERGEAAAAGAGVPAEAAGRGAGGRRRKRPLQR) is disordered. Low complexity predominate over residues 26-39 (AAAAGAGVPAEAAG). The span at 43–52 (GGRRRKRPLQ) shows a compositional bias: basic residues. The fork-head DNA-binding region spans 55-149 (KPPYSYIALI…ESGSFLRRRK (95 aa)).

Phosphorylated. Expressed in Rathke pouch, in thyroid, and in the epithelium of the pharyngeal wall and arches, whereas it is absent in the epithelium of the pharyngeal pouches.

Its subcellular location is the nucleus. In terms of biological role, transcription factor that binds consensus sites on a variety of gene promoters and activate their transcription. Involved in proper palate formation, most probably through the expression of MSX1 and TGFB3 genes which are direct targets of this transcription factor. Also implicated in thyroid gland morphogenesis. May indirectly play a role in cell growth and migration through the regulation of WNT5A expression. In Mus musculus (Mouse), this protein is Forkhead box protein E1 (Foxe1).